The chain runs to 132 residues: Small ribosomal subunit protein uS8 (132 aa).

Belongs to the universal ribosomal protein uS8 family. As to quaternary structure, part of the 30S ribosomal subunit. Contacts proteins S5 and S12.

Its function is as follows. One of the primary rRNA binding proteins, it binds directly to 16S rRNA central domain where it helps coordinate assembly of the platform of the 30S subunit. The polypeptide is Small ribosomal subunit protein uS8 (Streptococcus pneumoniae (strain Taiwan19F-14)).